The primary structure comprises 4545 residues: Prolow-density lipoprotein receptor-related protein 1 (4545 aa).

Positions 1 to 19 (MLTPPLLLLLPLLSALVSG) are cleaved as a signal peptide. At 20-4424 (ATMDAPKTCS…SQQQPGHMAS (4405 aa)) the chain is on the extracellular side. LDL-receptor class A domains lie at 26 to 67 (KTCS…ICPQ) and 71 to 111 (QRCP…HCRE). Disulfide bonds link Cys28-Cys41, Cys35-Cys54, Cys48-Cys65, Cys73-Cys86, Cys80-Cys99, and Cys93-Cys109. The 39-residue stretch at 112–150 (LRANCSRMGCQHHCVPTPSGPTCYCNSSFQLQADGKTCK) folds into the EGF-like 1 domain. A glycan (N-linked (GlcNAc...) asparagine) is linked at Asn115. Disulfide bonds link Cys116-Cys125, Cys121-Cys134, Cys136-Cys149, Cys155-Cys165, Cys161-Cys174, and Cys176-Cys189. N-linked (GlcNAc...) asparagine glycosylation is present at Asn137. One can recognise an EGF-like 2; calcium-binding domain in the interval 151–190 (DFDECSVYGTCSQLCTNTDGSFTCGCVEGYLLQPDNRSCK). Residues Asn186, Asn240, and Asn275 are each glycosylated (N-linked (GlcNAc...) asparagine). LDL-receptor class B repeat units lie at residues 293–335 (GNFY…DPAM), 336–379 (GKVF…DLVS), and 380–423 (RLVY…FENY). N-linked (GlcNAc...) asparagine glycosylation is present at Asn358. Residue Asn447 is glycosylated (N-linked (GlcNAc...) asparagine). Residues 475–521 (RSHACENDQYGKPGGCSDICLLANSHKARTCRCRSGFSLGSDGKSCK) enclose the EGF-like 3 domain. 3 disulfide bridges follow: Cys479/Cys494, Cys490/Cys505, and Cys507/Cys520. LDL-receptor class B repeat units follow at residues 572–614 (GFIY…DWMG), 615–660 (DNLY…DPLN), 661–711 (GWMY…DIPA), and 712–755 (GRLY…HGNY). The N-linked (GlcNAc...) asparagine glycan is linked to Asn730. The EGF-like 4 domain occupies 804 to 844 (GTNKCRVNNGGCSSLCLATPGSRQCACAEDQVLDTDGVTCL). 33 disulfide bridges follow: Cys808–Cys819, Cys815–Cys828, Cys830–Cys843, Cys855–Cys867, Cys862–Cys880, Cys874–Cys891, Cys896–Cys908, Cys903–Cys921, Cys915–Cys932, Cys937–Cys949, Cys944–Cys962, Cys956–Cys972, Cys977–Cys990, Cys985–Cys1003, Cys997–Cys1012, Cys1016–Cys1028, Cys1023–Cys1041, Cys1035–Cys1052, Cys1063–Cys1076, Cys1070–Cys1089, Cys1083–Cys1098, Cys1105–Cys1119, Cys1113–Cys1132, Cys1126–Cys1141, Cys1146–Cys1160, Cys1153–Cys1173, Cys1167–Cys1183, Cys1186–Cys1197, Cys1193–Cys1207, Cys1209–Cys1222, Cys1228–Cys1238, Cys1234–Cys1247, and Cys1249–Cys1262. LDL-receptor class A domains are found at residues 853–893 (PQCQ…LCHQ), 894–934 (HTCP…TCSA), 935–974 (RTCPPNQFSCASGRCIPISWTCDLDDDCGDRSDESASCAY), 975–1014 (PTCFPLTQFTCNNGRCININWRCDNDNDCGDNSDEAGCSH), 1014–1054 (HSCS…NCTN), 1061–1100 (GGCHSDEFQCRLDGLCIPLRWRCDGDTDCMDSSDEKSCEG), 1103–1143 (HVCD…NCEA), and 1144–1183 (LACRPPSHPCANNTSVCLPPDKLCDGKDDCGDGSDEGELC). Ca(2+) contacts are provided by Trp872, Asp875, Asp877, Asp879, Asp885, and Glu886. An N-linked (GlcNAc...) asparagine glycan is attached at Asn929. Residues Trp1033, Asp1036, Asp1038, Asp1040, Asp1046, and Glu1047 each coordinate Ca(2+). An N-linked (GlcNAc...) asparagine glycan is attached at Asn1051. Residues Trp1081, Asp1084, Asp1086, Asp1088, Asp1094, and Glu1095 each coordinate Ca(2+). N-linked (GlcNAc...) asparagine glycosylation is found at Asn1155 and Asn1156. 2 EGF-like domains span residues 1184–1223 (DQCSLNNGGCSHNCSVAPGEGIVCSCPLGMELGSDNHTCQ) and 1224–1263 (IQSYCAKHLKCSQKCDQNKFSVKCSCYEGWVLEPDGESCR). 2 N-linked (GlcNAc...) asparagine glycosylation sites follow: Asn1196 and Asn1219. 5 LDL-receptor class B repeats span residues 1310–1356 (SALY…DWIA), 1357–1399 (GNIY…DPRD), 1400–1446 (GILF…DYLE), 1447–1491 (KRIL…YGGE), and 1492–1532 (VYWT…YHPS). An N-linked (GlcNAc...) asparagine glycan is attached at Asn1512. The region spanning 1537–1580 (APNPCEANGGRGPCSHLCLINYNRTVSCACPHLMKLHKDNTTCY) is the EGF-like 7 domain. Cystine bridges form between Cys1541–Cys1554, Cys1550–Cys1564, and Cys1566–Cys1579. N-linked (GlcNAc...) asparagine glycosylation is found at Asn1559, Asn1576, Asn1617, and Asn1646. LDL-receptor class B repeat units lie at residues 1628-1670 (QRVY…DWVS), 1671-1714 (RNLF…HPLR), 1715-1754 (GKLYWTDGDNISMANMDGSNHTLLFSGQKGPVGLAIDFPE), and 1755-1799 (SKLY…MGDK). N-linked (GlcNAc...) asparagine glycans are attached at residues Asn1724, Asn1734, Asn1764, and Asn1826. Positions 1847–1888 (GTNPCSVNNGDCSQLCLPTSETTRSCMCTAGYSLRSGQQACE) constitute an EGF-like 8 domain. Intrachain disulfides connect Cys1851-Cys1862, Cys1858-Cys1872, and Cys1874-Cys1887. The N-linked (GlcNAc...) asparagine glycan is linked to Asn1934. LDL-receptor class B repeat units follow at residues 1935 to 1977 (DTIY…DWIA), 1978 to 2020 (GNIY…HPEK), 2021 to 2064 (GYLF…DYQG), and 2065 to 2108 (GKLY…FEDF). Residue Asn1996 is glycosylated (N-linked (GlcNAc...) asparagine). An N6-acetyllysine modification is found at Lys2010. Asn2049 carries an N-linked (GlcNAc...) asparagine glycan. 2 N-linked (GlcNAc...) asparagine glycosylation sites follow: Asn2118 and Asn2128. Residues 2156–2196 (GTNVCAVANGGCQQLCLYRGGGQRACACAHGMLAEDGASCR) enclose the EGF-like 9 domain. Cystine bridges form between Cys2160–Cys2171, Cys2167–Cys2181, and Cys2183–Cys2195. LDL-receptor class B repeat units follow at residues 2254–2295 (NRIF…HRGW), 2296–2344 (DTLY…DECQ), 2345–2389 (NLMF…DHRA), 2390–2432 (EKLY…YGEH), and 2433–2474 (IFWT…VAND). N-linked (GlcNAc...) asparagine glycosylation occurs at Asn2473. One can recognise an EGF-like 10 domain in the interval 2479 to 2519 (ELSPCRINNGGCQDLCLLTHQGHVNCSCRGGRILQEDFTCR). 3 cysteine pairs are disulfide-bonded: Cys2483/Cys2494, Cys2490/Cys2504, and Cys2506/Cys2518. Asn2503 carries an N-linked (GlcNAc...) asparagine glycan. N-linked (GlcNAc...) asparagine glycosylation is present at Asn2522. LDL-receptor class A domains follow at residues 2523 to 2564 (SSCR…YCNS), 2565 to 2603 (RRCKKTFRQCNNGRCVSNMLWCNGVDDCGDGSDEIPCNK), 2604 to 2642 (TACGVGEFRCRDGSCIGNSSRCNQFVDCEDASDEMNCSA), 2643 to 2691 (TDCS…DCPG), 2695 to 2733 (PRCPLNYFACPSGRCIPMSWTCDKEDDCENGEDETHCNK), 2733 to 2772 (KFCSEAQFECQNHRCISKQWLCDGSDDCGDGSDEAAHCEG), and 2773 to 2815 (KTCG…GCLY). 6 disulfides stabilise this stretch: Cys2525–Cys2538, Cys2533–Cys2551, Cys2545–Cys2562, Cys2567–Cys2579, Cys2574–Cys2592, and Cys2586–Cys2601. N-linked (GlcNAc...) asparagine glycosylation is present at Asn2602. Disulfide bonds link Cys2606/Cys2618, Cys2613/Cys2631, Cys2625/Cys2640, Cys2645/Cys2667, Cys2661/Cys2680, Cys2674/Cys2689, Cys2697/Cys2709, Cys2704/Cys2722, Cys2716/Cys2731, Cys2735/Cys2747, Cys2742/Cys2760, Cys2754/Cys2770, Cys2775/Cys2788, Cys2782/Cys2801, and Cys2795/Cys2813. Residues Asn2621 and Asn2639 are each glycosylated (N-linked (GlcNAc...) asparagine). Asn2816 carries N-linked (GlcNAc...) asparagine glycosylation. LDL-receptor class A domains are found at residues 2817–2856 (STCDDREFMCQNRLCIPKHFVCDHDRDCADGSDESPECEY), 2857–2900 (PTCG…HCTS), and 2903–2941 (HKCNASSQFLCSSGRCVAEALLCNGQDDCGDGSDERGCH). Cystine bridges form between Cys2819/Cys2831, Cys2826/Cys2844, Cys2838/Cys2854, Cys2859/Cys2871, Cys2866/Cys2885, Cys2879/Cys2898, Cys2905/Cys2918, Cys2913/Cys2931, Cys2925/Cys2940, Cys2945/Cys2957, Cys2953/Cys2966, Cys2968/Cys2981, Cys2987/Cys2997, Cys2993/Cys3006, and Cys3008/Cys3022. The N-linked (GlcNAc...) asparagine glycan is linked to Asn2906. The EGF-like 11 domain maps to 2942–2982 (VNECLSRKLSGCSQDCEDLKIGFKCRCRPGFRLKDDGRTCA). The EGF-like 12; calcium-binding domain occupies 2983–3023 (DLDECSTTFPCSQLCINTHGSYKCLCVEGYAPRGGDPHSCK). 2 N-linked (GlcNAc...) asparagine glycosylation sites follow: Asn3049 and Asn3090. 5 LDL-receptor class B repeats span residues 3070–3114 (QMIY…DWVG), 3115–3157 (GNLY…DVQN), 3158–3201 (GYLY…DYVT), 3202–3244 (ERIY…FEDY), and 3245–3285 (VYWT…FHAL). A glycan (N-linked (GlcNAc...) asparagine) is linked at Asn3265. In terms of domain architecture, EGF-like 13 spans 3291 to 3332 (PNHPCKVNNGGCSNLCLLSPGGGHKCACPTNFYLGGDGRTCV). Cystine bridges form between Cys3295/Cys3306, Cys3302/Cys3316, and Cys3318/Cys3331. LDL-receptor class A domains follow at residues 3333 to 3372 (SNCTASQFVCKNDKCIPFWWKCDTEDDCGDHSDEPPDCPE), 3373 to 3411 (FKCRPGQFQCSTGICTNPAFICDGDNDCQDNSDEANCDI), 3412 to 3451 (HVCLPSQFKCTNTNRCIPGIFRCNGQDNCGDGEDERDCPE), 3452 to 3492 (VTCA…NCTQ), 3493 to 3534 (MTCG…ECDE), 3535 to 3573 (RTCEPYQFRCKNNRCVPGRWQCDYDNDCGDNSDEESCTP), 3574 to 3612 (RPCSESEFSCANGRCIAGRWKCDGDHDCADGSDEKDCTP), 3612 to 3650 (PRCDMDQFQCKSGHCIPLRWRCDADADCMDGSDEEACGT), 3653 to 3693 (RTCP…ECAR), 3694 to 3734 (FICP…DCEP), and 3740 to 3779 (PHCKDKKEFLCRNQRCLSSSLRCNMFDDCGDGSDEEDCSI). Asn3334 is a glycosylation site (N-linked (GlcNAc...) asparagine). Intrachain disulfides connect Cys3335/Cys3347, Cys3342/Cys3360, Cys3354/Cys3370, Cys3375/Cys3387, Cys3382/Cys3400, Cys3394/Cys3409, Cys3414/Cys3427, Cys3421/Cys3440, Cys3434/Cys3449, Cys3454/Cys3467, Cys3461/Cys3480, Cys3474/Cys3490, Cys3495/Cys3508, Cys3502/Cys3521, Cys3515/Cys3532, Cys3537/Cys3549, Cys3544/Cys3562, Cys3556/Cys3571, Cys3576/Cys3588, Cys3583/Cys3601, Cys3595/Cys3610, Cys3614/Cys3626, Cys3621/Cys3639, Cys3633/Cys3648, Cys3655/Cys3667, Cys3662/Cys3680, Cys3674/Cys3691, Cys3696/Cys3710, Cys3704/Cys3723, Cys3717/Cys3732, Cys3742/Cys3755, Cys3750/Cys3768, Cys3762/Cys3777, Cys3786/Cys3799, Cys3793/Cys3808, Cys3810/Cys3823, Cys3829/Cys3839, Cys3835/Cys3848, and Cys3850/Cys3861. Residue Asn3489 is glycosylated (N-linked (GlcNAc...) asparagine). An N-linked (GlcNAc...) asparagine glycan is attached at Asn3663. EGF-like domains lie at 3782–3824 (KLTS…PGCQ) and 3825–3862 (DINECLRFGTCSQLCNNTKGGHLCSCARNFMKTHNTCK). N-linked (GlcNAc...) asparagine glycosylation is present at Asn3789. Asn3840 carries an N-linked (GlcNAc...) asparagine glycan. LDL-receptor class B repeat units follow at residues 3913-3955 (GRVY…HLNI), 3971-4013 (GNVY…DPLR), 4014-4057 (GTMY…DYHN), and 4058-4102 (ERLY…FEDY). Positions 3941–3944 (RHRR) match the Recognition site for proteolytical processing motif. N-linked (GlcNAc...) asparagine glycosylation is present at Asn3954. 2 N-linked (GlcNAc...) asparagine glycosylation sites follow: Asn4076 and Asn4126. EGF-like domains are found at residues 4148–4184 (VTNPCDRKKCEWLCLLSPSGPVCTCPNGKRLDNGTCV), 4197–4233 (RPGTCTLQCFNGGSCFLNARRQPKCRCQPRYTGDKCE), 4233–4269 (ELDQCWEYCHNGGTCAASPSGMPTCRCPTGFTGPKCT), 4269–4305 (TAQVCAGYCSNNSTCTVNQGNQPQCRCLPGFLGDRCQ), 4305–4341 (QYRQCSGFCENFGTCQMAADGSRQCRCTVYFEGPRCE), 4341–4376 (EVNKCSRCLQGACVVNKQTGDVTCNCTDGRVAPSCL), and 4374–4410 (SCLTCIDHCSNGGSCTMNSKMMPECQCPPHMTGPRCE). 17 cysteine pairs are disulfide-bonded: Cys4152–Cys4161, Cys4157–Cys4170, Cys4172–Cys4183, Cys4201–Cys4211, Cys4205–Cys4221, Cys4223–Cys4232, Cys4237–Cys4247, Cys4241–Cys4257, Cys4259–Cys4268, Cys4273–Cys4283, Cys4277–Cys4293, Cys4295–Cys4304, Cys4309–Cys4319, Cys4313–Cys4329, Cys4331–Cys4340, Cys4345–Cys4353, and Cys4348–Cys4364. Asn4180 carries N-linked (GlcNAc...) asparagine glycosylation. N-linked (GlcNAc...) asparagine glycosylation is found at Asn4279 and Asn4280. Asn4365 carries N-linked (GlcNAc...) asparagine glycosylation. 4 cysteine pairs are disulfide-bonded: Cys4366–Cys4375, Cys4378–Cys4388, Cys4382–Cys4398, and Cys4400–Cys4409. The helical transmembrane segment at 4425 to 4445 (ILIPLLLLLLLLLVAGVVFWY) threads the bilayer. Residues 4446 to 4545 (KRRVRGAKGF…PEDEIGDPLA (100 aa)) are Cytoplasmic-facing. The interval 4446 to 4545 (KRRVRGAKGF…PEDEIGDPLA (100 aa)) is interaction with MAFB. Thr4461 carries the phosphothreonine modification. Positions 4503–4508 (FTNPVY) match the NPXY motif motif. A Phosphotyrosine modification is found at Tyr4508. Residues Ser4518, Ser4521, and Ser4524 each carry the phosphoserine modification.

This sequence belongs to the LDLR family. Heterodimer of an 85-kDa membrane-bound carboxyl subunit and a non-covalently attached 515-kDa N-terminal subunit. Intracellular domain interacts with MAFB. Found in a complex with PID1/PCLI1, LRP1 and CUBNI. Interacts with SNX17, PID1/PCLI1, PDGF and CUBN. The intracellular domain interacts with SHC1, GULP1 and DAB1. Can weakly interact (via NPXY motif) with DAB2 (via PID domain); the interaction is enhanced by tyrosine phosphorylation of the NPXY motif. Interacts with MDK; promotes neuronal survival. Interacts with LRPAP1; this interaction is followed by rapid internalization. Interacts with uPA/PLAU and PAI1/SERPINE1, either individually or in complex with each other, leading to rapid endocytosis; this interaction is abolished in the presence of LRPAP1/RAP. Also interacts with tPA/PLAT alone or in complex with SERPINE1. Interacts with the urokinase receptor PLAUR; this interaction leads to PLAUR internalization and is impaired in the presence of SORL1. Interacts with PDGFB. Interacts with TAU/MAPT, leading to endocytosis; this interaction is reduced in the presence of LRPAP1/RAP. Interacts with IGFBP3. Interacts with ADGRG6. In terms of processing, phosphorylated on serine and threonine residues. Post-translationally, phosphorylated on tyrosine residues upon stimulation with PDGF. Tyrosine phosphorylation promotes interaction with SHC1. Cleaved into a 85 kDa membrane-spanning subunit (LRP-85) and a 515 kDa large extracellular domain (LRP-515) that remains non-covalently associated. Gamma-secretase-dependent cleavage of LRP-85 releases the intracellular domain from the membrane.

The protein localises to the cell membrane. It localises to the membrane. It is found in the coated pit. The protein resides in the golgi outpost. Its subcellular location is the cytoplasm. The protein localises to the cytoskeleton. It localises to the microtubule organizing center. It is found in the nucleus. Functionally, endocytic receptor involved in endocytosis and in phagocytosis of apoptotic cells. Required for early embryonic development. Involved in cellular lipid homeostasis. Involved in the plasma clearance of chylomicron remnants and activated LRPAP1 (alpha 2-macroglobulin), as well as the local metabolism of complexes between plasminogen activators and their endogenous inhibitors. Acts as an alpha-2-macroglobulin receptor. Acts as a TAU/MAPT receptor and controls the endocytosis of TAU/MAPT as well as its subsequent spread. May modulate cellular events, such as APP metabolism, kinase-dependent intracellular signaling, neuronal calcium signaling as well as neurotransmission. Also acts as a receptor for IGFBP3 to mediate cell growth inhibition. Its function is as follows. (Microbial infection) Functions as a receptor for Vibrio cholerae cholix toxin and for Pseudomonas aeruginosa exotoxin A. The chain is Prolow-density lipoprotein receptor-related protein 1 from Mus musculus (Mouse).